A 244-amino-acid chain; its full sequence is Adenosylcobinamide-GDP ribazoletransferase (244 aa).

A run of 5 helical transmembrane segments spans residues 33 to 53, 57 to 77, 109 to 129, 132 to 152, and 176 to 196; these read WFAV…WLGA, PWLA…GLHL, FAVI…MLAV, GVGW…AVWW, and FWLS…VLLL.

It belongs to the CobS family. The cofactor is Mg(2+).

It is found in the cell inner membrane. It carries out the reaction alpha-ribazole + adenosylcob(III)inamide-GDP = adenosylcob(III)alamin + GMP + H(+). The enzyme catalyses alpha-ribazole 5'-phosphate + adenosylcob(III)inamide-GDP = adenosylcob(III)alamin 5'-phosphate + GMP + H(+). It participates in cofactor biosynthesis; adenosylcobalamin biosynthesis; adenosylcobalamin from cob(II)yrinate a,c-diamide: step 7/7. Its function is as follows. Joins adenosylcobinamide-GDP and alpha-ribazole to generate adenosylcobalamin (Ado-cobalamin). Also synthesizes adenosylcobalamin 5'-phosphate from adenosylcobinamide-GDP and alpha-ribazole 5'-phosphate. In Laribacter hongkongensis (strain HLHK9), this protein is Adenosylcobinamide-GDP ribazoletransferase.